A 551-amino-acid polypeptide reads, in one-letter code: Interleukin-2 receptor subunit beta (551 aa).

The signal sequence occupies residues 1-26; the sequence is MATLALSWCLPLLILLLPLATSSASA. The Extracellular segment spans residues 27–240; it reads AVNGTSRFTC…TKPAALGKDT (214 aa). N-linked (GlcNAc...) asparagine glycans are attached at residues N29, N43, and N71. A disulfide bridge connects residues C36 and C46. A disulfide bridge links C74 with C86. In terms of domain architecture, Fibronectin type-III spans 134–234; that stretch reads APISLQVVHV…QPLAFRTKPA (101 aa). N149 carries N-linked (GlcNAc...) asparagine glycosylation. The WSXWS motif motif lies at 220–224; the sequence is WSPWS. The chain crosses the membrane as a helical span at residues 241–265; sequence IPWLGHLLVGLSGAFGFIILVYLLI. Residues 266 to 551 are Cytoplasmic-facing; it reads NCRNTGPWLK…LQDQDPTHLV (286 aa). A Box 1 motif motif is present at residues 278-286; the sequence is LKCHTPDPS. Disordered regions lie at residues 389 to 417, 430 to 484, and 496 to 517; these read EEEP…EDDA, FSPS…DLVD, and AGEQ…ARPP.

The protein belongs to the type I cytokine receptor family. Type 4 subfamily. As to quaternary structure, non-covalent dimer of an alpha and a beta subunit. IL2R exists in 3 different forms: a high affinity dimer, an intermediate affinity monomer (beta subunit), and a low affinity monomer (alpha subunit). The high and intermediate affinity forms also associate with a gamma subunit. Interacts with SHB upon interleukin stimulation.

The protein resides in the cell membrane. It is found in the cell surface. Functionally, receptor for interleukin-2. This beta subunit is involved in receptor mediated endocytosis and transduces the mitogenic signals of IL2. Probably in association with IL15RA, involved in the stimulation of neutrophil phagocytosis by IL15. The polypeptide is Interleukin-2 receptor subunit beta (IL2RB) (Macaca fascicularis (Crab-eating macaque)).